A 72-amino-acid chain; its full sequence is Translation initiation factor IF-1 (72 aa).

The region spanning 1–72 (MAKEEAIEIE…TKGRITYRYK (72 aa)) is the S1-like domain.

It belongs to the IF-1 family. As to quaternary structure, component of the 30S ribosomal translation pre-initiation complex which assembles on the 30S ribosome in the order IF-2 and IF-3, IF-1 and N-formylmethionyl-tRNA(fMet); mRNA recruitment can occur at any time during PIC assembly.

The protein resides in the cytoplasm. Functionally, one of the essential components for the initiation of protein synthesis. Stabilizes the binding of IF-2 and IF-3 on the 30S subunit to which N-formylmethionyl-tRNA(fMet) subsequently binds. Helps modulate mRNA selection, yielding the 30S pre-initiation complex (PIC). Upon addition of the 50S ribosomal subunit IF-1, IF-2 and IF-3 are released leaving the mature 70S translation initiation complex. This chain is Translation initiation factor IF-1, found in Chlorobium phaeobacteroides (strain DSM 266 / SMG 266 / 2430).